A 372-amino-acid polypeptide reads, in one-letter code: Alanine dehydrogenase 1 (372 aa).

The active site involves His-94. 170-200 (TYVIFGGGVAATNAANVALGLNAKVIIIELN) contacts NAD(+).

Belongs to the AlaDH/PNT family.

The catalysed reaction is L-alanine + NAD(+) + H2O = pyruvate + NH4(+) + NADH + H(+). It participates in amino-acid degradation; L-alanine degradation via dehydrogenase pathway; NH(3) and pyruvate from L-alanine: step 1/1. In terms of biological role, may play a role in cell wall synthesis as L-alanine is an important constituent of the peptidoglycan layer. The chain is Alanine dehydrogenase 1 (ald1) from Staphylococcus aureus (strain NCTC 8325 / PS 47).